The primary structure comprises 282 residues: Lipoyl synthase (282 aa).

[4Fe-4S] cluster-binding residues include cysteine 37, cysteine 42, cysteine 48, cysteine 63, cysteine 67, cysteine 70, and serine 275. Residues 49–264 (WSRGTATFMI…RLVGIEKGFR (216 aa)) enclose the Radical SAM core domain.

It belongs to the radical SAM superfamily. Lipoyl synthase family. [4Fe-4S] cluster serves as cofactor.

Its subcellular location is the cytoplasm. It carries out the reaction [[Fe-S] cluster scaffold protein carrying a second [4Fe-4S](2+) cluster] + N(6)-octanoyl-L-lysyl-[protein] + 2 oxidized [2Fe-2S]-[ferredoxin] + 2 S-adenosyl-L-methionine + 4 H(+) = [[Fe-S] cluster scaffold protein] + N(6)-[(R)-dihydrolipoyl]-L-lysyl-[protein] + 4 Fe(3+) + 2 hydrogen sulfide + 2 5'-deoxyadenosine + 2 L-methionine + 2 reduced [2Fe-2S]-[ferredoxin]. It functions in the pathway protein modification; protein lipoylation via endogenous pathway; protein N(6)-(lipoyl)lysine from octanoyl-[acyl-carrier-protein]: step 2/2. Catalyzes the radical-mediated insertion of two sulfur atoms into the C-6 and C-8 positions of the octanoyl moiety bound to the lipoyl domains of lipoate-dependent enzymes, thereby converting the octanoylated domains into lipoylated derivatives. This is Lipoyl synthase from Porphyromonas gingivalis (strain ATCC 33277 / DSM 20709 / CIP 103683 / JCM 12257 / NCTC 11834 / 2561).